Reading from the N-terminus, the 927-residue chain is Probable RNA-dependent RNA polymerase 4 (927 aa).

The interval 98 to 135 (GESPVQFPRTPGKKSCRASQAEVSLDREDPSPKFLRGD) is disordered. Over residues 121 to 135 (SLDREDPSPKFLRGD) the composition is skewed to basic and acidic residues.

This sequence belongs to the RdRP family.

It catalyses the reaction RNA(n) + a ribonucleoside 5'-triphosphate = RNA(n+1) + diphosphate. Probably involved in the RNA silencing pathway and required for the generation of small interfering RNAs (siRNAs). This Arabidopsis thaliana (Mouse-ear cress) protein is Probable RNA-dependent RNA polymerase 4 (RDR4).